A 670-amino-acid polypeptide reads, in one-letter code: MTNIQTQLDNLRKTLRQYEYEYHVLDNPSVPDSEYDRLFHQLKALELEHPEFLTSDSPTQRVGAKPLSGFSQIRHEIPMLSLDNAFSDAEFNAFVKRIEDRLILLPKPLTFCCEPKLDGLAVSILYVNGELTQAATRGDGTTGEDITANIRTIRNVPLQLLTDNPPARLEVRGEVFMPHAGFERLNKYALEHNEKTFANPRNAAAGSLRQLDPNITSKRPLVLNAYGIGIAEGIDLPTTHYDRLQWLKSIGIPVNPEIRLCNGADEVLGFYRDIQNKRSSLGYDIDGTVLKINDIALQNELGFISKAPRWAIAYKFPAQEELTLLNDVEFQVGRTGAITPVAKLEPVFVAGVTVSNATLHNGDEIERLNIAIGDTVVIRRAGDVIPQIIGVLHERRPDNAKPIIFPTNCPVCDSQIIRIEGEAVARCTGGLFCAAQRKEALKHFVSRKAMDIDGVGGKLIEQLVDRELIHTPADLFKLDLTTLTRLERMGAKSAENALNSLENAKSTTLDRFIFALGIREVGEATALNLANHFKTLDALKDANLEELQQVPDVGEVVANRIFIFWREAHNVAVVEDLIAQGVHWETVEVKEASENLFKDKTVVLTGTLTQMGRNEAKALLQQLGAKVSGSVSSKTDFVIAGDGAGSKLAKAQELNITVLTEEEFLAQITR.

Residues 32–36 (DSEYD), 81–82 (SL), and E114 each bind NAD(+). K116 (N6-AMP-lysine intermediate) is an active-site residue. NAD(+) contacts are provided by R137, E174, K291, and K315. Positions 409, 412, 427, and 433 each coordinate Zn(2+). The BRCT domain maps to 592-670 (ASENLFKDKT…EEEFLAQITR (79 aa)).

The protein belongs to the NAD-dependent DNA ligase family. LigA subfamily. Requires Mg(2+) as cofactor. Mn(2+) serves as cofactor.

The catalysed reaction is NAD(+) + (deoxyribonucleotide)n-3'-hydroxyl + 5'-phospho-(deoxyribonucleotide)m = (deoxyribonucleotide)n+m + AMP + beta-nicotinamide D-nucleotide.. In terms of biological role, DNA ligase that catalyzes the formation of phosphodiester linkages between 5'-phosphoryl and 3'-hydroxyl groups in double-stranded DNA using NAD as a coenzyme and as the energy source for the reaction. It is essential for DNA replication and repair of damaged DNA. In Haemophilus influenzae (strain 86-028NP), this protein is DNA ligase.